The following is a 213-amino-acid chain: Nicolin-1 (213 aa).

Part of the neuronal tubulin polyglutamylase complex which contains TPGS1, TPGS2, TTLL1, LRRC49 and NICN1. As to expression, high expression level is found in brain, testis, liver and kidney. Weak expression in spleen, leukocytes, small intestin and colon.

It is found in the nucleus. This is Nicolin-1 (Nicn1) from Mus musculus (Mouse).